The chain runs to 146 residues: Putative pre-16S rRNA nuclease (146 aa).

It belongs to the YqgF nuclease family.

It is found in the cytoplasm. Its function is as follows. Could be a nuclease involved in processing of the 5'-end of pre-16S rRNA. This is Putative pre-16S rRNA nuclease from Pseudomonas savastanoi pv. phaseolicola (strain 1448A / Race 6) (Pseudomonas syringae pv. phaseolicola (strain 1448A / Race 6)).